The primary structure comprises 214 residues: External core antigen (214 aa).

Positions 1-19 (MQLFHLCLIISCTCPTFQA) are cleaved as a signal peptide. Residues 25–27 (GWL) form an HBEAG region. The segment at 165-214 (NAPILSTLPETTVVRRRDRGRSPRRRTPSPRRRRSQSPRRRRSQSRESQC) is disordered. Basic residues predominate over residues 178 to 207 (VRRRDRGRSPRRRTPSPRRRRSQSPRRRRS). The stretch at 186-192 (SPRRRTP) is one 1; half-length repeat. Residues 186 to 208 (SPRRRTPSPRRRRSQSPRRRRSQ) form a 3 X 8 AA repeats of S-P-R-R-R-R-S-Q region. A propeptide spanning residues 186 to 214 (SPRRRTPSPRRRRSQSPRRRRSQSRESQC) is cleaved from the precursor. 2 tandem repeats follow at residues 193–200 (SPRRRRSQ) and 201–208 (SPRRRRSQ).

Belongs to the orthohepadnavirus precore antigen family. As to quaternary structure, homodimerizes. In terms of processing, phosphorylated. Post-translationally, cleaved by host furin.

The protein localises to the secreted. Its subcellular location is the host nucleus. In terms of biological role, may regulate immune response to the intracellular capsid in acting as a T-cell tolerogen, by having an immunoregulatory effect which prevents destruction of infected cells by cytotoxic T-cells. This immune regulation may predispose to chronicity during perinatal infections and prevent severe liver injury during adult infections. The polypeptide is External core antigen (Homo sapiens (Human)).